The following is a 1862-amino-acid chain: Transient receptor potential cation channel subfamily M member 7 (1862 aa).

Met1 is subject to N-acetylmethionine. Residues 1 to 850 (MSQKSWIEST…ITRKFYAFYH (850 aa)) lie on the Cytoplasmic side of the membrane. Phosphoserine is present on Ser101. A compositionally biased stretch (low complexity) spans 544 to 554 (NRRSGRNASSS). The segment at 544–574 (NRRSGRNASSSTPQLRKSHETFGNRADKKEK) is disordered. Positions 560 to 573 (KSHETFGNRADKKE) are enriched in basic and acidic residues. The chain crosses the membrane as a helical span at residues 851–876 (APIVKFWFNTLAYLGFLMLYTFVVLV). Residues 877–882 (QMEQLP) lie on the Extracellular side of the membrane. A helical transmembrane segment spans residues 883-904 (SVQEWIVIAYIFTYAIEKIREV). The Cytoplasmic segment spans residues 905–923 (FMSEAGKISQKIKVWFSDY). The helical transmembrane segment at 924 to 943 (FNVSDTIAIISFFVGFGLRF) threads the bilayer. Over 944 to 956 (GAKWNYINAYDNH) the chain is Extracellular. Residues 957-980 (VFVAGRLIYCLNIIFWYVRLLDFL) traverse the membrane as a helical segment. Topologically, residues 981–999 (AVNQQAGPYVMMIGKMVAN) are cytoplasmic. The chain crosses the membrane as a helical span at residues 1000 to 1023 (MFYIVVIMALVLLSFGVPRKAILY). Residues 1024-1025 (PH) lie on the Extracellular side of the membrane. Positions 1026–1066 (EEPSWSLAKDIVFHPYWMIFGEVYAYEIDVCANDSALPTIC) form an intramembrane region, pore-forming. Residues 1067-1069 (GPG) are Extracellular-facing. Residues 1070–1098 (TWLTPFLQAVYLFVQYIIMVNLLIAFFNN) form a helical membrane-spanning segment. Residues 1099–1862 (VYLQVKAISN…EATNSVRLML (764 aa)) lie on the Cytoplasmic side of the membrane. S-palmitoyl cysteine attachment occurs at residues Cys1143, Cys1144, and Cys1146. Residue Thr1163 is modified to Phosphothreonine. Ser1191, Ser1193, Ser1224, Ser1255, and Ser1258 each carry phosphoserine. Residues 1198–1250 (RVTFERVEQMSIQIKEVGDRVNYIKRSLQSLDSQIGHLQDLSALTVDTLKTLT) are a coiled coil. At Thr1265 the chain carries Phosphothreonine. Residues Ser1300, Ser1357, Ser1360, Ser1385, Ser1386, Ser1389, Ser1394, Ser1395, and Ser1403 each carry the phosphoserine modification. The tract at residues 1380-1418 (NQKLGSSPNSSPHMSSPPTKFSVSTPSQPSCKSHLESTT) is disordered. Over residues 1385–1397 (SSPNSSPHMSSPP) the composition is skewed to low complexity. The segment covering 1398 to 1410 (TKFSVSTPSQPSC) has biased composition (polar residues). Thr1404 carries the post-translational modification Phosphothreonine. Phosphoserine is present on residues Ser1406 and Ser1445. Thr1454 bears the Phosphothreonine mark. The residue at position 1455 (Ser1455) is a Phosphoserine. Thr1466 and Thr1470 each carry phosphothreonine. A disordered region spans residues 1485 to 1511 (TPTSLHSEQESCSRRASTEDSPDVDSR). Ser1491, Ser1497, Ser1501, Ser1510, and Ser1530 each carry phosphoserine. Residues 1491-1502 (SEQESCSRRAST) are compositionally biased toward basic and acidic residues. Thr1534 is modified (phosphothreonine). Ser1540 is modified (phosphoserine). Thr1548 carries the phosphothreonine modification. Residues Ser1564 and Ser1566 each carry the phosphoserine modification. Position 1580 is a phosphothreonine (Thr1580). Residues 1591–1821 (ILNNSMSSWS…CCRKLKLPDL (231 aa)) enclose the Alpha-type protein kinase domain. Residues Ser1595 and Ser1612 each carry the phosphoserine modification. 5 residues coordinate ADP: Gly1618, Gly1619, Leu1620, Arg1621, and Lys1645. Residue Ser1657 is modified to Phosphoserine. Thr1682 is modified (phosphothreonine). Residues Glu1717, Glu1718, and Met1720 each coordinate ADP. Residue His1750 participates in Zn(2+) binding. The active-site Proton acceptor is Asp1764. Asp1774 is a binding site for ADP. Ser1776 carries the post-translational modification Phosphoserine. Zn(2+) is bound by residues His1807, Cys1809, and Cys1813. Residue Thr1827 is modified to Phosphothreonine. Positions 1840-1862 (DLNLQAGNSTKESEATNSVRLML) are disordered. 2 positions are modified to phosphoserine: Ser1848 and Ser1857.

In the C-terminal section; belongs to the protein kinase superfamily. Alpha-type protein kinase family. ALPK subfamily. The protein in the N-terminal section; belongs to the transient receptor (TC 1.A.4) family. LTrpC subfamily. TRPM7 sub-subfamily. Homodimer. Homotetramer. Forms heteromers with TRPM6; heteromeric channels are functionally different from the homomeric channels. Interacts with PLCB1. Zn(2+) is required as a cofactor. In terms of processing, palmitoylated; palmitoylation at Cys-1143, Cys-1144 and Cys-1146 promotes TRPM7 trafficking from the Golgi to the surface membrane. Post-translationally, autophosphorylated; autophosphorylation regulates TRPM7 kinase activity towards its substrates. The C-terminal kinase domain can be cleaved from the channel segment in a cell-type-specific fashion. TRPM7 is cleaved by caspase-8, dissociating the kinase from the ion-conducting pore. The cleaved kinase fragments (M7CKs) can translocate to the cell nucleus and binds chromatin-remodeling complex proteins in a Zn(2+)-dependent manner to ultimately phosphorylate specific Ser/Thr residues of histones.

Its subcellular location is the cell membrane. It localises to the cytoplasmic vesicle membrane. The protein resides in the nucleus. The enzyme catalyses L-seryl-[protein] + ATP = O-phospho-L-seryl-[protein] + ADP + H(+). The catalysed reaction is L-threonyl-[protein] + ATP = O-phospho-L-threonyl-[protein] + ADP + H(+). It carries out the reaction Mg(2+)(in) = Mg(2+)(out). It catalyses the reaction Ca(2+)(in) = Ca(2+)(out). The enzyme catalyses Zn(2+)(in) = Zn(2+)(out). Its activity is regulated as follows. Channel displays constitutive activity. Channel activity is negatively regulated by cytosolic Mg(2+), Mg-ATP, low intracellular pH. Resting free cytosolic Mg(2+) and Mg-ATP concentrations seem to be sufficient to block native TRPM7 channel activity. TRPM7 channel activity is highly dependent on membrane levels of phosphatidylinositol 4,5 bisphosphate (PIP2). PIP2 hydrolysis negatively regulates TRPM7 channel activity. TRPM7 kinase activity does not affect channel activity. The kinase activity is controlled through the autophosphorylation of a serine/threonine-rich region located N-terminal to the catalytic domain. In terms of biological role, bifunctional protein that combines an ion channel with an intrinsic kinase domain, enabling it to modulate cellular functions either by conducting ions through the pore or by phosphorylating downstream proteins via its kinase domain. The channel is highly permeable to divalent cations, specifically calcium (Ca2+), magnesium (Mg2+) and zinc (Zn2+) and mediates their influx. Controls a wide range of biological processes such as Ca2(+), Mg(2+) and Zn(2+) homeostasis, vesicular Zn(2+) release channel and intracellular Ca(2+) signaling, embryonic development, immune responses, cell motility, proliferation and differentiation. The C-terminal alpha-kinase domain autophosphorylates cytoplasmic residues of TRPM7. TRPM7 phosphorylates SMAD2, suggesting that TRPM7 kinase may play a role in activating SMAD signaling pathways. In vitro, TRPM7 kinase phosphorylates ANXA1 (annexin A1), myosin II isoforms and a variety of proteins with diverse cellular functions. Functionally, the cleaved channel exhibits substantially higher current and potentiates Fas receptor signaling. The C-terminal kinase domain can be cleaved from the channel segment in a cell-type-specific fashion. In immune cells, the TRPM7 kinase domain is clipped from the channel domain by caspases in response to Fas-receptor stimulation. The cleaved kinase fragments can translocate to the nucleus, and bind chromatin-remodeling complex proteins in a Zn(2+)-dependent manner to ultimately phosphorylate specific Ser/Thr residues of histones known to be functionally important for cell differentiation and embryonic development. The chain is Transient receptor potential cation channel subfamily M member 7 from Rattus norvegicus (Rat).